A 445-amino-acid polypeptide reads, in one-letter code: Phosphoglucosamine mutase (445 aa).

The active-site Phosphoserine intermediate is serine 103. Positions 103, 240, 242, and 244 each coordinate Mg(2+). Serine 103 carries the post-translational modification Phosphoserine.

The protein belongs to the phosphohexose mutase family. Mg(2+) is required as a cofactor. In terms of processing, activated by phosphorylation.

It carries out the reaction alpha-D-glucosamine 1-phosphate = D-glucosamine 6-phosphate. In terms of biological role, catalyzes the conversion of glucosamine-6-phosphate to glucosamine-1-phosphate. The chain is Phosphoglucosamine mutase from Cellvibrio japonicus (strain Ueda107) (Pseudomonas fluorescens subsp. cellulosa).